Here is a 900-residue protein sequence, read N- to C-terminus: Translation initiation factor IF-2 (900 aa).

Disordered stretches follow at residues 30–77 and 89–291; these read GEFV…SLDK and NGKA…YDSM. Low complexity predominate over residues 89-112; that stretch reads NGKATAAPAKAADSGGAAIVSPTT. Pro residues predominate over residues 113–129; the sequence is PAAPEPPTAVPPSPQAP. The span at 175 to 187 shows a compositional bias: low complexity; it reads PGTARPGVPRPGA. The span at 215 to 271 shows a compositional bias: gly residues; sequence GRPGAPGAGRSDAGGGNYRGGGVGAAPGTGFRGRPGGGGGGRPGQRGGAAGAFGRPG. A compositionally biased stretch (basic residues) spans 275-284; the sequence is RRGRKSKRQK. The 172-residue stretch at 396 to 567 folds into the tr-type G domain; it reads VRPPVVTVMG…AVLLTADAAL (172 aa). The interval 405–412 is G1; the sequence is GHVDHGKT. GTP is bound at residue 405–412; that stretch reads GHVDHGKT. Positions 430 to 434 are G2; the sequence is GITQH. Residues 455 to 458 form a G3 region; sequence DTPG. Residues 455–459 and 509–512 each bind GTP; these read DTPGH and NKID. The interval 509 to 512 is G4; that stretch reads NKID. The interval 545-547 is G5; sequence SAK.

The protein belongs to the TRAFAC class translation factor GTPase superfamily. Classic translation factor GTPase family. IF-2 subfamily.

The protein resides in the cytoplasm. One of the essential components for the initiation of protein synthesis. Protects formylmethionyl-tRNA from spontaneous hydrolysis and promotes its binding to the 30S ribosomal subunits. Also involved in the hydrolysis of GTP during the formation of the 70S ribosomal complex. This chain is Translation initiation factor IF-2, found in Mycobacterium bovis (strain BCG / Pasteur 1173P2).